A 130-amino-acid chain; its full sequence is Fluoride-specific ion channel FluC (130 aa).

The next 4 helical transmembrane spans lie at 2 to 22, 36 to 56, 71 to 91, and 100 to 120; these read GLLLLLVGIGGGFGAMARFAL, GILLCNIIGSLIIGMMAAFLI, FLLVTGFLGGFTTFSSFSLDI, and IFIAIGYIMVSVLASLIAVIL. Residues Gly79 and Thr82 each coordinate Na(+).

It belongs to the fluoride channel Fluc/FEX (TC 1.A.43) family.

The protein resides in the cell inner membrane. The enzyme catalyses fluoride(in) = fluoride(out). Its activity is regulated as follows. Na(+) is not transported, but it plays an essential structural role and its presence is essential for fluoride channel function. In terms of biological role, fluoride-specific ion channel. Important for reducing fluoride concentration in the cell, thus reducing its toxicity. This Francisella tularensis subsp. mediasiatica (strain FSC147) protein is Fluoride-specific ion channel FluC.